The chain runs to 151 residues: UPF0208 membrane protein YfbV (151 aa).

2 helical membrane-spanning segments follow: residues 46-65 (FGIR…QIAL) and 69-91 (LGPA…WWLG).

This sequence belongs to the UPF0208 family.

Its subcellular location is the cell inner membrane. This chain is UPF0208 membrane protein YfbV (yfbV), found in Photorhabdus temperata.